A 1453-amino-acid polypeptide reads, in one-letter code: DNA-directed RNA polymerase IV subunit 1 (1453 aa).

Residues Cys56, Cys59, Cys67, His70, Cys97, Cys100, and Cys121 each coordinate Zn(2+). 3 residues coordinate Mg(2+): Asp447, Asp449, and Asp451. Residues 806 to 818 are bridging helix; it reads PLESFVHSVTSRD.

This sequence belongs to the RNA polymerase beta' chain family. As to quaternary structure, component of the RNA polymerase IV complex. Interacts with NRPD2, NRPD3, NRPD3B, NRPD4, NRPD5, NRPD5B, NRPD6A, NRPD7, NRPD7B, NRPD9A, NRPD9B, NRPD10, NRPD11, NRPD12, RDR2, RDM4, CLSY1, CLSY2, CLSY3, CLSY4 and SHH1. As to expression, mostly expressed in flowers, and, to a lower extent, in leaves.

Its subcellular location is the nucleus. The enzyme catalyses RNA(n) + a ribonucleoside 5'-triphosphate = RNA(n+1) + diphosphate. Functionally, DNA-dependent RNA polymerase catalyzes the transcription of DNA into RNA using the four ribonucleoside triphosphates as substrates. Largest and catalytic component of RNA polymerase IV which mediates 24-nt short-interfering RNAs (siRNA) accumulation. Implicated in siRNA-directed heterochromatin formation through the action of DCL3 and AGO4, and subsequent DNA methylation-dependent silencing of targeted sequences. Essential component of a self-reinforcing loop coupling de novo DNA methylation to siRNA production. Required for intercellular but not intracellular RNA interference (RNAi) leading to systemic post-transcriptional gene silencing. Involved in the maintenance of post-transcriptional RNA silencing. This chain is DNA-directed RNA polymerase IV subunit 1 (NRPD1), found in Arabidopsis thaliana (Mouse-ear cress).